The following is a 237-amino-acid chain: 2-C-methyl-D-erythritol 4-phosphate cytidylyltransferase (237 aa).

This sequence belongs to the IspD/TarI cytidylyltransferase family. IspD subfamily.

The enzyme catalyses 2-C-methyl-D-erythritol 4-phosphate + CTP + H(+) = 4-CDP-2-C-methyl-D-erythritol + diphosphate. It functions in the pathway isoprenoid biosynthesis; isopentenyl diphosphate biosynthesis via DXP pathway; isopentenyl diphosphate from 1-deoxy-D-xylulose 5-phosphate: step 2/6. Functionally, catalyzes the formation of 4-diphosphocytidyl-2-C-methyl-D-erythritol from CTP and 2-C-methyl-D-erythritol 4-phosphate (MEP). This Vibrio vulnificus (strain CMCP6) protein is 2-C-methyl-D-erythritol 4-phosphate cytidylyltransferase.